The following is a 207-amino-acid chain: Guanylate kinase (207 aa).

Positions 3–181 constitute a Guanylate kinase-like domain; sequence GQLFVICGPS…AVEMVVSIVR (179 aa). 10 to 17 serves as a coordination point for ATP; that stretch reads GPSGAGKT.

It belongs to the guanylate kinase family.

It is found in the cytoplasm. The enzyme catalyses GMP + ATP = GDP + ADP. In terms of biological role, essential for recycling GMP and indirectly, cGMP. The polypeptide is Guanylate kinase (gmk) (Thermotoga maritima (strain ATCC 43589 / DSM 3109 / JCM 10099 / NBRC 100826 / MSB8)).